The sequence spans 278 residues: Acyl-[acyl-carrier-protein]--UDP-N-acetylglucosamine O-acyltransferase (278 aa).

The protein belongs to the transferase hexapeptide repeat family. LpxA subfamily. Homotrimer.

The protein localises to the cytoplasm. The catalysed reaction is a (3R)-hydroxyacyl-[ACP] + UDP-N-acetyl-alpha-D-glucosamine = a UDP-3-O-[(3R)-3-hydroxyacyl]-N-acetyl-alpha-D-glucosamine + holo-[ACP]. It participates in glycolipid biosynthesis; lipid IV(A) biosynthesis; lipid IV(A) from (3R)-3-hydroxytetradecanoyl-[acyl-carrier-protein] and UDP-N-acetyl-alpha-D-glucosamine: step 1/6. Functionally, involved in the biosynthesis of lipid A, a phosphorylated glycolipid that anchors the lipopolysaccharide to the outer membrane of the cell. The chain is Acyl-[acyl-carrier-protein]--UDP-N-acetylglucosamine O-acyltransferase from Brucella anthropi (strain ATCC 49188 / DSM 6882 / CCUG 24695 / JCM 21032 / LMG 3331 / NBRC 15819 / NCTC 12168 / Alc 37) (Ochrobactrum anthropi).